We begin with the raw amino-acid sequence, 317 residues long: MGDVIKSIFTFVLIVEFIIGNLGNSFIALVNCIDWVKGRKISSVDQILTALAISRISLVWLIFGSWCVSVFLPALFATEKMFRMLTNIWTVINHFSVWLATGLGTFYFLKIANFSNSIFLYLKWRVKKVVLVLLLVTSVFLFLNIALINIHINASINGYRRNKTCSSDSSNFTRFSSLIVLTSTVFIFIPFTLSLAMFLLLIFSLWKHRKKMQHXVKRSGDASTKAHRGVKSVITFFLLYAIFCLSFFISVWTSERLEENLIILSQVMGMAYPSCHSCVLILGNKKLRQASLSVLLWLRYMFKDGEPSGHKEFRESS.

At 1-7 (MGDVIKS) the chain is on the extracellular side. A helical transmembrane segment spans residues 8–28 (IFTFVLIVEFIIGNLGNSFIA). The Cytoplasmic segment spans residues 29–55 (LVNCIDWVKGRKISSVDQILTALAISR). The helical transmembrane segment at 56-76 (ISLVWLIFGSWCVSVFLPALF) threads the bilayer. Over 77 to 87 (ATEKMFRMLTN) the chain is Extracellular. Residues Thr-86 and Trp-89 each contribute to the cholesterol site. Residues 88-108 (IWTVINHFSVWLATGLGTFYF) form a helical membrane-spanning segment. The Cytoplasmic segment spans residues 109-129 (LKIANFSNSIFLYLKWRVKKV). The chain crosses the membrane as a helical span at residues 130–150 (VLVLLLVTSVFLFLNIALINI). Residues 151–184 (HINASINGYRRNKTCSSDSSNFTRFSSLIVLTST) lie on the Extracellular side of the membrane. Asn-153, Asn-162, and Asn-171 each carry an N-linked (GlcNAc...) asparagine glycan. Val-180 is a cholesterol binding site. Residues 185–205 (VFIFIPFTLSLAMFLLLIFSL) form a helical membrane-spanning segment. Over 206–232 (WKHRKKMQHXVKRSGDASTKAHRGVKS) the chain is Cytoplasmic. Residues 233-253 (VITFFLLYAIFCLSFFISVWT) form a helical membrane-spanning segment. Residues 254 to 261 (SERLEENL) lie on the Extracellular side of the membrane. Residues 262 to 282 (IILSQVMGMAYPSCHSCVLIL) form a helical membrane-spanning segment. Residues Ser-265 and Met-268 each contribute to the cholesterol site. The Cytoplasmic portion of the chain corresponds to 283-317 (GNKKLRQASLSVLLWLRYMFKDGEPSGHKEFRESS).

The protein belongs to the G-protein coupled receptor T2R family. Core component of the TAS2R14-GNAI1 complex, consisting of TAS2R14, GNAI1, GNB1 and GNG2; within the complex interacts with GNAI1. Core component of the TAS2R14-GNAT3 complex, consisting of TAS2R14, GNAT3, GNB1 and GNG2; within the complex interacts with GNAT3. Core component of the TAS2R14-GNAS2 complex, consisting of TAS2R14, GNAS2, GNB1 and GNG2; within the complex interacts with GNAS2.

It localises to the membrane. The catalysed reaction is Ca(2+)(in) = Ca(2+)(out). It carries out the reaction 3',5'-cyclic AMP(in) = 3',5'-cyclic AMP(out). Basal activity is enhanced by binding to bitter tastants, such as flufenamic acid and aristolochic acid. Regulated by cholesterol in a concentration-dependent manner. Its function is as follows. Gustducin-linked G-protein coupled receptor that plays a role in the perception of bitterness. The activity of this receptor stimulates GNAT3, activating the gustducin G-protein pathway. Likely plays a role in sensing the chemical composition of the gastrointestinal content and other extra-oral tissues via the inhibitory G-protein pathways. This Gorilla gorilla gorilla (Western lowland gorilla) protein is Taste receptor type 2 member 14 (TAS2R14).